The sequence spans 614 residues: MCGIIGYIGRREAAPLLLNGLKRLEYRGYDSAGMAVLNGSMKMLKKKGSVSNLEELLNVSGTVMLGATVGIAHTRWATHGDPSDRNAHPHMNVSGDIALIHNGIIENYSALKQELMGEGYVFESDTDSEVLVHLIDRIWKNDSALGLEGAVRQALRHVEGAYGICVVSSREPDKIVVARKGSPLVIGLGDGEFFIASDAAPIVEHTNKVVYLSDGEMAVVTRDSYTVKTIENVEQQKRVTELDFSLEKIEKGGFEHFMLKEIFEQPEVMRDVMRGRVRVEEGRVHLGGIHDYLDRLKQAKRIMICACGTSWHAGLIGEYLIEEFARIPVEVDYASEFRYRNPIVSSDDVVIVISQSGETADTLAALRLAKEKGAMVMGICNVVGSTIPRETLCGMYTHAGPEVGVASTKAFTAQVIVLFMLAMALSKGRTISQEEIKLNLRELAEVPDKVAWILEQNDAIKEIAVKLKDARNALYLGRGYNFPVALEGALKLKEISYIHAEGYPAAEMKHGPIALIDEDMPVIVIATRDNTYAKILSNIEEVRSRKGRVIAIASEGDREIERLTEDVIYIPQASAAVLPLLTVIPLQLLSYHVATLRGCNVDRPRNLAKSVTVE.

Cys-2 serves as the catalytic Nucleophile; for GATase activity. Residues 2 to 223 enclose the Glutamine amidotransferase type-2 domain; sequence CGIIGYIGRR…DGEMAVVTRD (222 aa). 2 consecutive SIS domains span residues 292 to 431 and 463 to 604; these read YLDR…GRTI and IAVK…VDRP. The active-site For Fru-6P isomerization activity is the Lys-609.

As to quaternary structure, homodimer.

It localises to the cytoplasm. The catalysed reaction is D-fructose 6-phosphate + L-glutamine = D-glucosamine 6-phosphate + L-glutamate. Its function is as follows. Catalyzes the first step in hexosamine metabolism, converting fructose-6P into glucosamine-6P using glutamine as a nitrogen source. The chain is Glutamine--fructose-6-phosphate aminotransferase [isomerizing] from Chlorobaculum tepidum (strain ATCC 49652 / DSM 12025 / NBRC 103806 / TLS) (Chlorobium tepidum).